Here is a 553-residue protein sequence, read N- to C-terminus: Glutamate--tRNA ligase (553 aa).

Positions 103-113 (PNPSGPLHIGH) match the 'HIGH' region motif.

Belongs to the class-I aminoacyl-tRNA synthetase family. Glutamate--tRNA ligase type 2 subfamily.

Its subcellular location is the cytoplasm. It catalyses the reaction tRNA(Glu) + L-glutamate + ATP = L-glutamyl-tRNA(Glu) + AMP + diphosphate. Its function is as follows. Catalyzes the attachment of glutamate to tRNA(Glu) in a two-step reaction: glutamate is first activated by ATP to form Glu-AMP and then transferred to the acceptor end of tRNA(Glu). This is Glutamate--tRNA ligase from Methanothermobacter thermautotrophicus (strain ATCC 29096 / DSM 1053 / JCM 10044 / NBRC 100330 / Delta H) (Methanobacterium thermoautotrophicum).